The chain runs to 296 residues: 33 kDa chaperonin (296 aa).

Disulfide bonds link Cys-233–Cys-235 and Cys-267–Cys-270.

Belongs to the HSP33 family. Under oxidizing conditions two disulfide bonds are formed involving the reactive cysteines. Under reducing conditions zinc is bound to the reactive cysteines and the protein is inactive.

It is found in the cytoplasm. Functionally, redox regulated molecular chaperone. Protects both thermally unfolding and oxidatively damaged proteins from irreversible aggregation. Plays an important role in the bacterial defense system toward oxidative stress. The protein is 33 kDa chaperonin of Actinobacillus pleuropneumoniae serotype 3 (strain JL03).